The chain runs to 344 residues: Dihydroorotase (344 aa).

Residues His13 and His15 each coordinate Zn(2+). Residues 15 to 17 (HLR) and Asn41 each bind substrate. Zn(2+)-binding residues include Lys98, His135, and His173. Lys98 carries the N6-carboxylysine modification. Residue His135 participates in substrate binding. Leu218 is a binding site for substrate. Asp247 provides a ligand contact to Zn(2+). Asp247 is an active-site residue. Substrate-binding residues include His251 and Ala263.

This sequence belongs to the metallo-dependent hydrolases superfamily. DHOase family. Class II DHOase subfamily. Homodimer. Zn(2+) is required as a cofactor.

The enzyme catalyses (S)-dihydroorotate + H2O = N-carbamoyl-L-aspartate + H(+). Its pathway is pyrimidine metabolism; UMP biosynthesis via de novo pathway; (S)-dihydroorotate from bicarbonate: step 3/3. Functionally, catalyzes the reversible cyclization of carbamoyl aspartate to dihydroorotate. This is Dihydroorotase from Neisseria gonorrhoeae (strain NCCP11945).